The sequence spans 799 residues: E3 UFM1-protein ligase 1 homolog (799 aa).

A disordered region spans residues 429–483; it reads TTTTTTTQPSKKKDNLINSDDDDNQDNNKKSSKGKNKKSKQQQSSIQKLINDSED. Residues 458 to 468 show a composition bias toward basic residues; it reads KSSKGKNKKSK. Positions 469–478 are enriched in low complexity; that stretch reads QQQSSIQKLI.

It belongs to the UFL1 family.

Functionally, E3 UFM1-protein ligase that mediates ufmylation of target proteins. The chain is E3 UFM1-protein ligase 1 homolog from Dictyostelium discoideum (Social amoeba).